The sequence spans 109 residues: U26-theraphotoxin-Cg1a (109 aa).

The first 18 residues, M1 to A18, serve as a signal peptide directing secretion. Residues Y19–R67 constitute a propeptide that is removed on maturation. 3 cysteine pairs are disulfide-bonded: C68–C83, C75–C88, and C82–C103.

This sequence belongs to the neurotoxin 14 (magi-1) family. 07 (Jztx-56) subfamily. In terms of tissue distribution, expressed by the venom gland.

The protein resides in the secreted. Its function is as follows. Probable ion channel inhibitor. This Chilobrachys guangxiensis (Chinese earth tiger tarantula) protein is U26-theraphotoxin-Cg1a.